The primary structure comprises 180 residues: O-acetyl-ADP-ribose deacetylase (180 aa).

The 175-residue stretch at M1 to G175 folds into the Macro domain. Substrate-binding positions include D11–I12, N25, G33–D35, and S122–Y126. D35 (proton acceptor) is an active-site residue.

The protein belongs to the MacroD-type family. YmdB subfamily. As to quaternary structure, homodimer. Interacts with RNase III.

The catalysed reaction is 3''-O-acetyl-ADP-D-ribose + H2O = ADP-D-ribose + acetate + H(+). It catalyses the reaction 2''-O-acetyl-ADP-D-ribose + H2O = ADP-D-ribose + acetate + H(+). Functionally, deacetylates O-acetyl-ADP ribose to yield ADP-ribose and free acetate. Down-regulates ribonuclease 3 (RNase III) activity. Acts by interacting directly with the region of the ribonuclease that is required for dimerization/activation. This chain is O-acetyl-ADP-ribose deacetylase, found in Enterobacter cloacae subsp. cloacae (strain ATCC 13047 / DSM 30054 / NBRC 13535 / NCTC 10005 / WDCM 00083 / NCDC 279-56).